The sequence spans 710 residues: Solute carrier organic anion transporter family member 3A1 (710 aa).

At methionine 1 the chain carries N-acetylmethionine. Residues 1–25 (MQAKKPGGSSGGGRSGELQGDEAQR) form a disordered region. Residues 1-40 (MQAKKPGGSSGGGRSGELQGDEAQRNKKKKKKVSCFSNIK) lie on the Cytoplasmic side of the membrane. A helical transmembrane segment spans residues 41 to 60 (IFLVSECALMLAQGTVGAYL). Residues 61–79 (VSVLTTLERRFNLQSADVG) are Extracellular-facing. The chain crosses the membrane as a helical span at residues 80–100 (VIASSFEIGNLALILFVSYFG). The Cytoplasmic portion of the chain corresponds to 101–106 (ARGHRP). The chain crosses the membrane as a helical span at residues 107-131 (RLIGCGGIVMALGALLSALPEFLTH). The Extracellular segment spans residues 132 to 174 (QYKYEAGEIRWGAEGRDVCAANGSGGDQGPDPDLICRSRTATN). N-linked (GlcNAc...) asparagine glycosylation is present at asparagine 153. Residues 175–203 (MMYLLLIGAQVLLGIGATPVQPLGVSYID) traverse the membrane as a helical segment. Over 204–222 (DHVRRKDSSLYIGILFTML) the chain is Cytoplasmic. Residues 223–243 (VFGPACGFILGSFCTKIYVDA) form a helical membrane-spanning segment. The Extracellular segment spans residues 244–261 (VFIDTSNLDITPDDPRWI). The helical transmembrane segment at 262–286 (GAWWGGFLLCGALLFFSSVLMFGFP) threads the bilayer. Over 287–344 (QSLPPHSDPALESEQAMLPEREYERPKPSNGVLRHPLEPDSSASCFQQLRVIPKVTKH) the chain is Cytoplasmic. Residues 345-366 (LLSNPVFTCIILAACMEIAVVA) form a helical membrane-spanning segment. Over 367 to 386 (GFAAFLGKYLEQQFNLTTSS) the chain is Extracellular. The N-linked (GlcNAc...) asparagine glycan is linked to asparagine 381. Residues 387–410 (ANQLLGMTAIPCACLGIFLGGLLV) traverse the membrane as a helical segment. At 411–414 (KKLS) the chain is on the cytoplasmic side. Residues 415 to 438 (LSALGAIRMAMLVNLVSTACYVSF) traverse the membrane as a helical segment. Residues 439-539 (LFLGCDTGPV…PGCQEAFLTF (101 aa)) lie on the Extracellular side of the membrane. N-linked (GlcNAc...) asparagine glycosylation occurs at asparagine 457. Residues 465–513 (LDPYSSCNKNCECQTDSFTPVCGADGITYLSACFAGCNSTNLTGCACLM) enclose the Kazal-like domain. 3 disulfide bridges follow: cysteine 471-cysteine 501, cysteine 477-cysteine 497, and cysteine 486-cysteine 511. Asparagine 502, asparagine 505, and asparagine 519 each carry an N-linked (GlcNAc...) asparagine glycan. The helical transmembrane segment at 540 to 562 (LCVMCVCSMIGAMAQTPSVIILI) threads the bilayer. Topologically, residues 563–571 (RTVSPELKS) are cytoplasmic. A helical membrane pass occupies residues 572 to 597 (YALGVLFLLLRLLGFIPPPLIFGAGI). The Extracellular portion of the chain corresponds to 598 to 630 (DSTCLFWSTFCGEQGACALYDNVAYRYLYVSIA). Residues 631–648 (IALKSFAFLLYTTTWQCL) traverse the membrane as a helical segment. The Cytoplasmic portion of the chain corresponds to 649–705 (RKNYKRYIKNHEGGLSTSEFFASTLTLDNLGRDPVPANQTHRTKFIYNLEDHEWCEN).

The protein belongs to the organo anion transporter (TC 2.A.60) family.

Its subcellular location is the basolateral cell membrane. It localises to the apical cell membrane. The protein localises to the basal cell membrane. It catalyses the reaction L-thyroxine(out) = L-thyroxine(in). The enzyme catalyses prostaglandin E1(out) = prostaglandin E1(in). It carries out the reaction prostaglandin E2(out) = prostaglandin E2(in). The catalysed reaction is prostaglandin F2alpha(out) = prostaglandin F2alpha(in). It catalyses the reaction (5Z,8Z,11Z,14Z)-eicosatetraenoate(out) = (5Z,8Z,11Z,14Z)-eicosatetraenoate(in). The enzyme catalyses taurocholate(out) = taurocholate(in). It carries out the reaction glycocholate(out) = glycocholate(in). The catalysed reaction is estrone 3-sulfate(out) = estrone 3-sulfate(in). It catalyses the reaction argipressin(out) = argipressin(in). Putative organic anion antiporter with apparent broad substrate specificity. Recognizes various substrates including thyroid hormone L-thyroxine, prostanoids such as prostaglandin E1 and E2, bile acids such as taurocholate, glycolate and glycochenodeoxycholate and peptide hormones such as L-arginine vasopressin, likely operating in a tissue-specific manner. The transport mechanism, its electrogenicity and potential tissue-specific counterions remain to be elucidated. In Bos taurus (Bovine), this protein is Solute carrier organic anion transporter family member 3A1 (SLCO3A1).